We begin with the raw amino-acid sequence, 419 residues long: Farnesyl pyrophosphate synthase (419 aa).

Methionine 1 is modified (N-acetylmethionine). Isopentenyl diphosphate contacts are provided by lysine 123, arginine 126, and glutamine 162. At lysine 123 the chain carries N6-(2-hydroxyisobutyryl)lysine; alternate. Lysine 123 carries the post-translational modification N6-acetyllysine; alternate. Aspartate 169 and aspartate 173 together coordinate Mg(2+). Arginine 178 is a binding site for dimethylallyl diphosphate. Isopentenyl diphosphate is bound at residue arginine 179. The dimethylallyl diphosphate site is built by lysine 266, threonine 267, glutamine 306, lysine 323, and lysine 332. Residue lysine 353 is modified to N6-acetyllysine.

This sequence belongs to the FPP/GGPP synthase family. As to quaternary structure, homodimer. Interacts with RSAD2. In terms of assembly, (Microbial infection) Interacts with HTLV-1 protein p13(II). It depends on Mg(2+) as a cofactor.

It localises to the cytoplasm. It catalyses the reaction isopentenyl diphosphate + dimethylallyl diphosphate = (2E)-geranyl diphosphate + diphosphate. The catalysed reaction is isopentenyl diphosphate + (2E)-geranyl diphosphate = (2E,6E)-farnesyl diphosphate + diphosphate. Its pathway is isoprenoid biosynthesis; farnesyl diphosphate biosynthesis; farnesyl diphosphate from geranyl diphosphate and isopentenyl diphosphate: step 1/1. The protein operates within isoprenoid biosynthesis; geranyl diphosphate biosynthesis; geranyl diphosphate from dimethylallyl diphosphate and isopentenyl diphosphate: step 1/1. Inactivated by interferon-induced RSAD2. This inactivation may result of disruption of lipid rafts at the plasma membrane, and thus have an antiviral effect since many enveloped viruses need lipid rafts to bud efficiently out of the cell. In terms of biological role, key enzyme in isoprenoid biosynthesis which catalyzes the formation of farnesyl diphosphate (FPP), a precursor for several classes of essential metabolites including sterols, dolichols, carotenoids, and ubiquinones. FPP also serves as substrate for protein farnesylation and geranylgeranylation. Catalyzes the sequential condensation of isopentenyl pyrophosphate with the allylic pyrophosphates, dimethylallyl pyrophosphate, and then with the resultant geranylpyrophosphate to the ultimate product farnesyl pyrophosphate. This chain is Farnesyl pyrophosphate synthase, found in Homo sapiens (Human).